The chain runs to 155 residues: 6,7-dimethyl-8-ribityllumazine synthase (155 aa).

Residues phenylalanine 22, 56-58, and 80-82 each bind 5-amino-6-(D-ribitylamino)uracil; these read AFE and AVI. 85 to 86 contributes to the (2S)-2-hydroxy-3-oxobutyl phosphate binding site; sequence ST. Histidine 88 acts as the Proton donor in catalysis. Phenylalanine 113 is a binding site for 5-amino-6-(D-ribitylamino)uracil. Arginine 127 is a (2S)-2-hydroxy-3-oxobutyl phosphate binding site.

It belongs to the DMRL synthase family.

It carries out the reaction (2S)-2-hydroxy-3-oxobutyl phosphate + 5-amino-6-(D-ribitylamino)uracil = 6,7-dimethyl-8-(1-D-ribityl)lumazine + phosphate + 2 H2O + H(+). The protein operates within cofactor biosynthesis; riboflavin biosynthesis; riboflavin from 2-hydroxy-3-oxobutyl phosphate and 5-amino-6-(D-ribitylamino)uracil: step 1/2. Its function is as follows. Catalyzes the formation of 6,7-dimethyl-8-ribityllumazine by condensation of 5-amino-6-(D-ribitylamino)uracil with 3,4-dihydroxy-2-butanone 4-phosphate. This is the penultimate step in the biosynthesis of riboflavin. The polypeptide is 6,7-dimethyl-8-ribityllumazine synthase (Bifidobacterium longum subsp. infantis (strain ATCC 15697 / DSM 20088 / JCM 1222 / NCTC 11817 / S12)).